A 102-amino-acid chain; its full sequence is MAGQKIRIRLKAYDHEVVDSSARKIVETVTRTGAQVAGPVPLPTEINRFCVIRSPHKYKDSREHFEMRTHKRLIDIIDPTPKTVDSLMRLDLPAGVDIEIKL.

Belongs to the universal ribosomal protein uS10 family. Part of the 30S ribosomal subunit.

Functionally, involved in the binding of tRNA to the ribosomes. This Salinispora tropica (strain ATCC BAA-916 / DSM 44818 / JCM 13857 / NBRC 105044 / CNB-440) protein is Small ribosomal subunit protein uS10.